Here is a 311-residue protein sequence, read N- to C-terminus: Aspartate carbamoyltransferase catalytic subunit (311 aa).

Positions 58 and 59 each coordinate carbamoyl phosphate. Lys-86 contacts L-aspartate. Arg-108, His-136, and Gln-139 together coordinate carbamoyl phosphate. L-aspartate is bound by residues Arg-169 and Arg-223. Carbamoyl phosphate-binding residues include Gly-264 and Pro-265.

Belongs to the aspartate/ornithine carbamoyltransferase superfamily. ATCase family. In terms of assembly, heterododecamer (2C3:3R2) of six catalytic PyrB chains organized as two trimers (C3), and six regulatory PyrI chains organized as three dimers (R2).

The catalysed reaction is carbamoyl phosphate + L-aspartate = N-carbamoyl-L-aspartate + phosphate + H(+). Its pathway is pyrimidine metabolism; UMP biosynthesis via de novo pathway; (S)-dihydroorotate from bicarbonate: step 2/3. Its function is as follows. Catalyzes the condensation of carbamoyl phosphate and aspartate to form carbamoyl aspartate and inorganic phosphate, the committed step in the de novo pyrimidine nucleotide biosynthesis pathway. The chain is Aspartate carbamoyltransferase catalytic subunit from Acidiphilium cryptum (strain JF-5).